We begin with the raw amino-acid sequence, 823 residues long: Leucine--tRNA ligase (823 aa).

Positions 42–52 (PYPSGTLHMGH) match the 'HIGH' region motif. Residues 575–579 (KMSKS) carry the 'KMSKS' region motif. Residue Lys578 coordinates ATP.

Belongs to the class-I aminoacyl-tRNA synthetase family.

The protein localises to the cytoplasm. The catalysed reaction is tRNA(Leu) + L-leucine + ATP = L-leucyl-tRNA(Leu) + AMP + diphosphate. This chain is Leucine--tRNA ligase, found in Legionella pneumophila (strain Lens).